A 190-amino-acid chain; its full sequence is uncharacterized protein (190 aa).

The Cytoplasmic portion of the chain corresponds to 1–55 (MSRLRRFNRKILSLSSDYTHDGESDQEDVSILPLDTEEQEELIQKFETNAHITNK). A helical transmembrane segment spans residues 56–76 (LYINLLSILYLLYGGLLMILV). The Extracellular segment spans residues 77–80 (RKSR). The chain crosses the membrane as a helical span at residues 81–101 (GYIKLALLAGANSLICSCITL). Residues 102–123 (RYDIVNDYLLFKKFKLRVSNFS) lie on the Cytoplasmic side of the membrane. Residues 124–144 (INIINIILLVLMAWISFNHVV) form a helical membrane-spanning segment. At 145–149 (EDKKT) the chain is on the extracellular side. The chain crosses the membrane as a helical span at residues 150–170 (VLCLQVPMFLFWVAVLVKRWA). Residues 171 to 190 (RNIEDEIADLRCLKYKYKNA) lie on the Cytoplasmic side of the membrane.

It is found in the membrane. This is an uncharacterized protein from Saccharomyces cerevisiae (strain ATCC 204508 / S288c) (Baker's yeast).